Consider the following 1088-residue polypeptide: DNA polymerase II large subunit (1088 aa).

Belongs to the archaeal DNA polymerase II family. In terms of assembly, heterodimer of a large subunit and a small subunit.

The catalysed reaction is DNA(n) + a 2'-deoxyribonucleoside 5'-triphosphate = DNA(n+1) + diphosphate. The enzyme catalyses Exonucleolytic cleavage in the 3'- to 5'-direction to yield nucleoside 5'-phosphates.. Its function is as follows. Possesses two activities: a DNA synthesis (polymerase) and an exonucleolytic activity that degrades single-stranded DNA in the 3'- to 5'-direction. Has a template-primer preference which is characteristic of a replicative DNA polymerase. This Thermoplasma volcanium (strain ATCC 51530 / DSM 4299 / JCM 9571 / NBRC 15438 / GSS1) protein is DNA polymerase II large subunit (polC).